A 473-amino-acid chain; its full sequence is High-affinity proline transporter PutP (473 aa).

A run of 12 helical transmembrane segments spans residues 32–52 (LSAG…GAMF), 56–76 (LSGA…WLYV), 114–134 (IVIL…GGVL), 146–166 (GLWI…FLAV), 171–191 (FVQG…TFFH), 218–238 (VLGI…PHII), 256–276 (IGMG…LGGI), 299–319 (ILFH…AIMS), 350–370 (LVFL…VLAW), 376–396 (ILGL…PVVL), 408–428 (GALA…NAGL), and 431–451 (FLYE…FVSI).

It belongs to the sodium:solute symporter (SSF) (TC 2.A.21) family.

It localises to the cell membrane. The enzyme catalyses L-proline(in) + Na(+)(in) = L-proline(out) + Na(+)(out). Functionally, catalyzes the high-affinity uptake of extracellular proline. Important for the use of proline as a sole carbon and energy source or a sole nitrogen source. This chain is High-affinity proline transporter PutP, found in Bacillus subtilis (strain 168).